The sequence spans 31 residues: Potassium channel toxin alpha-KTx 5.1 (31 aa).

3 disulfide bridges follow: Cys3/Cys21, Cys8/Cys26, and Cys12/Cys28. The segment at 6–9 (RMCQ) is [R/K]XCQ motif. The residue at position 31 (His31) is a Histidine amide.

The protein belongs to the short scorpion toxin superfamily. Potassium channel inhibitor family. Alpha-KTx 05 subfamily. Two disulfide bonds are the minimal requirement needed to produce a nativelike and bio-active conformation in this toxin. The third disulfide provides an additional contribution to structure stabilization and can modulate biological potency depending on its position and the structural regions involved in biological activity. In terms of tissue distribution, expressed by the venom gland.

It is found in the secreted. Functionally, blocker for the small conductance calcium-activated potassium channels. Shows the best affinity for KCa2.2/KCNN2 (Kd=0.2 nM), followed by KCa2.3/KCNN3 (Kd=1.1 nM) and KCa2.1/KCNN1 (Kd=325 nM). The chain is Potassium channel toxin alpha-KTx 5.1 from Leiurus hebraeus (Hebrew deathstalker scorpion).